The chain runs to 499 residues: Alpha-L-arabinofuranosidase B (499 aa).

The first 18 residues, 1–18, serve as a signal peptide directing secretion; that stretch reads MFSRRNLVALGLAATVSA. 2 N-linked (GlcNAc...) asparagine glycosylation sites follow: asparagine 83 and asparagine 202.

The protein belongs to the glycosyl hydrolase 54 family.

The catalysed reaction is Hydrolysis of terminal non-reducing alpha-L-arabinofuranoside residues in alpha-L-arabinosides.. Its pathway is glycan metabolism; L-arabinan degradation. Its function is as follows. Able to hydrolyze 1,5-, 1,3- and 1,2-alpha-linkages not only in L-arabinofuranosyl oligosaccharides, but also in polysac-charides containing terminal non-reducing L-arabinofuranoses in side chains, like L-arabinan, arabinogalactan and arabinoxylan. In Aspergillus niger, this protein is Alpha-L-arabinofuranosidase B (abfB).